Consider the following 218-residue polypeptide: Large ribosomal subunit protein uL3 (218 aa).

Gln154 carries the post-translational modification N5-methylglutamine.

It belongs to the universal ribosomal protein uL3 family. Part of the 50S ribosomal subunit. Forms a cluster with proteins L14 and L19. In terms of processing, methylated by PrmB.

Its function is as follows. One of the primary rRNA binding proteins, it binds directly near the 3'-end of the 23S rRNA, where it nucleates assembly of the 50S subunit. In Polynucleobacter asymbioticus (strain DSM 18221 / CIP 109841 / QLW-P1DMWA-1) (Polynucleobacter necessarius subsp. asymbioticus), this protein is Large ribosomal subunit protein uL3.